A 786-amino-acid polypeptide reads, in one-letter code: Endonuclease MutS2 (786 aa).

Residue 335-342 (GPNTGGKT) coordinates ATP. The Smr domain occupies 711–786 (LDLRGERFEN…GLGVTVVELK (76 aa)).

Belongs to the DNA mismatch repair MutS family. MutS2 subfamily. As to quaternary structure, homodimer. Binds to stalled ribosomes, contacting rRNA.

Functionally, endonuclease that is involved in the suppression of homologous recombination and thus may have a key role in the control of bacterial genetic diversity. In terms of biological role, acts as a ribosome collision sensor, splitting the ribosome into its 2 subunits. Detects stalled/collided 70S ribosomes which it binds and splits by an ATP-hydrolysis driven conformational change. Acts upstream of the ribosome quality control system (RQC), a ribosome-associated complex that mediates the extraction of incompletely synthesized nascent chains from stalled ribosomes and their subsequent degradation. Probably generates substrates for RQC. This chain is Endonuclease MutS2, found in Bacillus cereus (strain AH820).